Here is a 101-residue protein sequence, read N- to C-terminus: Urease subunit beta (101 aa).

The protein belongs to the urease beta subunit family. As to quaternary structure, heterotrimer of UreA (gamma), UreB (beta) and UreC (alpha) subunits. Three heterotrimers associate to form the active enzyme.

Its subcellular location is the cytoplasm. It catalyses the reaction urea + 2 H2O + H(+) = hydrogencarbonate + 2 NH4(+). It participates in nitrogen metabolism; urea degradation; CO(2) and NH(3) from urea (urease route): step 1/1. This chain is Urease subunit beta, found in Azoarcus sp. (strain BH72).